We begin with the raw amino-acid sequence, 108 residues long: UPF0102 protein SO_0299 (108 aa).

This sequence belongs to the UPF0102 family.

In Shewanella oneidensis (strain ATCC 700550 / JCM 31522 / CIP 106686 / LMG 19005 / NCIMB 14063 / MR-1), this protein is UPF0102 protein SO_0299.